The following is a 305-amino-acid chain: UDP-3-O-acyl-N-acetylglucosamine deacetylase (305 aa).

Zn(2+) contacts are provided by H79, H238, and D242. The Proton donor role is filled by H265.

The protein belongs to the LpxC family. Requires Zn(2+) as cofactor.

It carries out the reaction a UDP-3-O-[(3R)-3-hydroxyacyl]-N-acetyl-alpha-D-glucosamine + H2O = a UDP-3-O-[(3R)-3-hydroxyacyl]-alpha-D-glucosamine + acetate. It participates in glycolipid biosynthesis; lipid IV(A) biosynthesis; lipid IV(A) from (3R)-3-hydroxytetradecanoyl-[acyl-carrier-protein] and UDP-N-acetyl-alpha-D-glucosamine: step 2/6. In terms of biological role, catalyzes the hydrolysis of UDP-3-O-myristoyl-N-acetylglucosamine to form UDP-3-O-myristoylglucosamine and acetate, the committed step in lipid A biosynthesis. The polypeptide is UDP-3-O-acyl-N-acetylglucosamine deacetylase (Histophilus somni (strain 129Pt) (Haemophilus somnus)).